A 589-amino-acid polypeptide reads, in one-letter code: ATP-dependent lipid A-core flippase (589 aa).

6 consecutive transmembrane segments (helical) span residues 33 to 53 (VLAI…AWII), 70 to 90 (LWVP…TFAS), 148 to 168 (VVVL…MTYL), 170 to 190 (GWLV…VTAA), 262 to 282 (LGAV…VILE), and 283 to 303 (TISP…LPPL). The 283-residue stretch at 33–315 (VLAIVCMVLA…VIGVNAEIQK (283 aa)) folds into the ABC transmembrane type-1 domain. In terms of domain architecture, ABC transporter spans 347–583 (IEFDRVAFRY…NGHYASLHRV (237 aa)). 381–388 (GRSGSGKT) lines the ATP pocket.

The protein belongs to the ABC transporter superfamily. Lipid exporter (TC 3.A.1.106) family. Homodimer.

It is found in the cell inner membrane. It catalyses the reaction ATP + H2O + lipid A-core oligosaccharideSide 1 = ADP + phosphate + lipid A-core oligosaccharideSide 2.. Functionally, involved in lipopolysaccharide (LPS) biosynthesis. Translocates lipid A-core from the inner to the outer leaflet of the inner membrane. Transmembrane domains (TMD) form a pore in the inner membrane and the ATP-binding domain (NBD) is responsible for energy generation. The sequence is that of ATP-dependent lipid A-core flippase from Alkalilimnicola ehrlichii (strain ATCC BAA-1101 / DSM 17681 / MLHE-1).